Reading from the N-terminus, the 570-residue chain is Glutamate--tRNA ligase (570 aa).

Residues 105–115 carry the 'HIGH' region motif; it reads PNPDGAFHLGN.

This sequence belongs to the class-I aminoacyl-tRNA synthetase family. Glutamate--tRNA ligase type 2 subfamily.

It localises to the cytoplasm. It catalyses the reaction tRNA(Glu) + L-glutamate + ATP = L-glutamyl-tRNA(Glu) + AMP + diphosphate. Functionally, catalyzes the attachment of glutamate to tRNA(Glu) in a two-step reaction: glutamate is first activated by ATP to form Glu-AMP and then transferred to the acceptor end of tRNA(Glu). The polypeptide is Glutamate--tRNA ligase (Pyrococcus horikoshii (strain ATCC 700860 / DSM 12428 / JCM 9974 / NBRC 100139 / OT-3)).